The sequence spans 289 residues: RNA-binding protein CP31B, chloroplastic (289 aa).

Residues 1 to 71 (MTSSVLTPSL…NSSPVVTFVS (71 aa)) constitute a chloroplast transit peptide. RRM domains follow at residues 113–191 (AKLF…RAAP) and 207–285 (FRIY…VAEE).

ADP-ribosylated by the Pseudomonas syringae type III effector HopU1. ADP-ribosylation reduces the ability of the protein to bind RNA.

The protein localises to the plastid. Its subcellular location is the chloroplast. Functionally, required for specific RNA editing events in chloroplasts and stabilizes specific chloroplast mRNAs. In Arabidopsis thaliana (Mouse-ear cress), this protein is RNA-binding protein CP31B, chloroplastic.